A 1275-amino-acid polypeptide reads, in one-letter code: Serine/threonine-protein kinase ULK4 (1275 aa).

One can recognise a Protein kinase domain in the interval 4 to 280; that stretch reads FILYEEIGRG…WTRLLQHSFW (277 aa). The Proton acceptor role is filled by D121. Disordered regions lie at residues 299 to 346 and 359 to 393; these read SRNT…EFRP and FLLS…SPLT. Over residues 336 to 346 the composition is skewed to basic and acidic residues; sequence FRLENPTEFRP. Polar residues-rich tracts occupy residues 363–373 and 384–393; these read SRPTPRTSTAV and CSPQKTSPLT. HEAT repeat units lie at residues 727–765, 842–880, 926–964, 1025–1063, 1151–1189, and 1213–1253; these read LIQE…YNRE, LKMC…ILSH, STVV…LLVN, LVEE…NLVA, NRPL…LYGG, and PKEQ…LAPG.

The protein belongs to the protein kinase superfamily. Ser/Thr protein kinase family. APG1/unc-51/ULK1 subfamily.

It catalyses the reaction L-seryl-[protein] + ATP = O-phospho-L-seryl-[protein] + ADP + H(+). The catalysed reaction is L-threonyl-[protein] + ATP = O-phospho-L-threonyl-[protein] + ADP + H(+). May be involved in the remodeling of cytoskeletal components, such as alpha-tubulin, and in this way regulates neurite branching and elongation, as well as cell motility. The protein is Serine/threonine-protein kinase ULK4 (ULK4) of Pongo abelii (Sumatran orangutan).